Here is a 292-residue protein sequence, read N- to C-terminus: Shikimate dehydrogenase (NADP(+)) (292 aa).

Shikimate-binding positions include 25-27 (SKS) and T72. The active-site Proton acceptor is K76. The shikimate site is built by N97 and D113. NADP(+) is bound by residues 137–141 (GAGGA), 161–166 (NRTQSK), and M230. Shikimate is bound at residue Y232. G254 contributes to the NADP(+) binding site.

It belongs to the shikimate dehydrogenase family. In terms of assembly, homodimer.

It catalyses the reaction shikimate + NADP(+) = 3-dehydroshikimate + NADPH + H(+). Its pathway is metabolic intermediate biosynthesis; chorismate biosynthesis; chorismate from D-erythrose 4-phosphate and phosphoenolpyruvate: step 4/7. Its function is as follows. Involved in the biosynthesis of the chorismate, which leads to the biosynthesis of aromatic amino acids. Catalyzes the reversible NADPH linked reduction of 3-dehydroshikimate (DHSA) to yield shikimate (SA). In Shewanella sp. (strain MR-7), this protein is Shikimate dehydrogenase (NADP(+)).